Consider the following 339-residue polypeptide: MIKEALARVIAGQDLPEQMAAGAMEAIMTGAATNAQIGSFLTALRMKGESPAEVAAFAAVMRVHAVQFQVRGGQGRLVDTCGTGGDQAGTFNISTAAAIVAAGAGVRIVKHGNRSASGRCGSADVLEELGVNLAMTPAQEQATLEQAGIVFLFAQTHHPAMKHVAAARKEIGIRTVFNILGPLTNPAGADAQLLGVPEPSLLDLLPPVLQTLGVDHAMIVCGGGLDEISTATATEVVEVKGTEILRYTLTPEQFGIPPVNIAELQGGDVHTSAAIIKGILDGEGGACREITLLNAAAAIYLGGRAVDLNEGVRLAATSIDSGAAAVTLQTLISTSRGET.

5-phospho-alpha-D-ribose 1-diphosphate contacts are provided by residues Gly-82, 85–86, Thr-90, 92–95, 110–118, and Ser-122; these read GD, NIST, and KHGNRSASG. Gly-82 serves as a coordination point for anthranilate. Ser-94 is a Mg(2+) binding site. Residue Asn-113 participates in anthranilate binding. Arg-168 serves as a coordination point for anthranilate. Positions 226 and 227 each coordinate Mg(2+).

The protein belongs to the anthranilate phosphoribosyltransferase family. In terms of assembly, homodimer. Mg(2+) is required as a cofactor.

The catalysed reaction is N-(5-phospho-beta-D-ribosyl)anthranilate + diphosphate = 5-phospho-alpha-D-ribose 1-diphosphate + anthranilate. It functions in the pathway amino-acid biosynthesis; L-tryptophan biosynthesis; L-tryptophan from chorismate: step 2/5. Catalyzes the transfer of the phosphoribosyl group of 5-phosphorylribose-1-pyrophosphate (PRPP) to anthranilate to yield N-(5'-phosphoribosyl)-anthranilate (PRA). The chain is Anthranilate phosphoribosyltransferase from Methanosphaerula palustris (strain ATCC BAA-1556 / DSM 19958 / E1-9c).